We begin with the raw amino-acid sequence, 211 residues long: Pyridoxine/pyridoxamine 5'-phosphate oxidase (211 aa).

Residues 7 to 10 (RRDY) and Lys-65 contribute to the substrate site. FMN contacts are provided by residues 60–65 (RIVLLK), 75–76 (YT), Arg-81, Lys-82, and Gln-104. The substrate site is built by Tyr-122, Arg-126, and Ser-130. FMN contacts are provided by residues 139–140 (QS) and Trp-184. Position 190–192 (190–192 (RLH)) interacts with substrate. Residue Arg-194 participates in FMN binding.

This sequence belongs to the pyridoxamine 5'-phosphate oxidase family. As to quaternary structure, homodimer. It depends on FMN as a cofactor.

The catalysed reaction is pyridoxamine 5'-phosphate + O2 + H2O = pyridoxal 5'-phosphate + H2O2 + NH4(+). It catalyses the reaction pyridoxine 5'-phosphate + O2 = pyridoxal 5'-phosphate + H2O2. Its pathway is cofactor metabolism; pyridoxal 5'-phosphate salvage; pyridoxal 5'-phosphate from pyridoxamine 5'-phosphate: step 1/1. The protein operates within cofactor metabolism; pyridoxal 5'-phosphate salvage; pyridoxal 5'-phosphate from pyridoxine 5'-phosphate: step 1/1. In terms of biological role, catalyzes the oxidation of either pyridoxine 5'-phosphate (PNP) or pyridoxamine 5'-phosphate (PMP) into pyridoxal 5'-phosphate (PLP). This chain is Pyridoxine/pyridoxamine 5'-phosphate oxidase, found in Aliivibrio fischeri (strain ATCC 700601 / ES114) (Vibrio fischeri).